The sequence spans 487 residues: 3-octaprenyl-4-hydroxybenzoate carboxy-lyase (487 aa).

Residue N172 coordinates Mn(2+). Residues 175 to 177 (IYR), 189 to 191 (RWL), and 194 to 195 (RG) contribute to the prenylated FMN site. E238 serves as a coordination point for Mn(2+). D287 serves as the catalytic Proton donor.

The protein belongs to the UbiD family. Homohexamer. Prenylated FMN is required as a cofactor. Requires Mn(2+) as cofactor.

The protein localises to the cell membrane. It carries out the reaction a 4-hydroxy-3-(all-trans-polyprenyl)benzoate + H(+) = a 2-(all-trans-polyprenyl)phenol + CO2. The protein operates within cofactor biosynthesis; ubiquinone biosynthesis. In terms of biological role, catalyzes the decarboxylation of 3-octaprenyl-4-hydroxy benzoate to 2-octaprenylphenol, an intermediate step in ubiquinone biosynthesis. This chain is 3-octaprenyl-4-hydroxybenzoate carboxy-lyase, found in Actinobacillus pleuropneumoniae serotype 5b (strain L20).